Consider the following 118-residue polypeptide: Large ribosomal subunit protein uL18 (118 aa).

This sequence belongs to the universal ribosomal protein uL18 family. As to quaternary structure, part of the 50S ribosomal subunit; part of the 5S rRNA/L5/L18/L25 subcomplex. Contacts the 5S and 23S rRNAs.

In terms of biological role, this is one of the proteins that bind and probably mediate the attachment of the 5S RNA into the large ribosomal subunit, where it forms part of the central protuberance. The protein is Large ribosomal subunit protein uL18 of Levilactobacillus brevis (strain ATCC 367 / BCRC 12310 / CIP 105137 / JCM 1170 / LMG 11437 / NCIMB 947 / NCTC 947) (Lactobacillus brevis).